Reading from the N-terminus, the 164-residue chain is Large ribosomal subunit protein uL23 (164 aa).

The tract at residues 1–41 (MPAKAASAAASKKNSAPKSAVSKKVAKKGAPAAAAKPTKVV) is disordered.

Belongs to the universal ribosomal protein uL23 family.

In terms of biological role, this protein binds to a specific region on the 26S rRNA. The polypeptide is Large ribosomal subunit protein uL23 (RPL23A) (Trypanosoma brucei brucei).